The sequence spans 99 residues: Microcin E492 (99 aa).

A signal peptide spans 1–15; the sequence is MREISQKDLNLAFGA. Residues 80–99 are disordered; it reads SWNGSGSGYNSATSSSGSGS. The segment covering 87–99 has biased composition (low complexity); the sequence is GYNSATSSSGSGS. At S99 the chain carries Serine microcin E492 siderophore ester.

It belongs to the class IIa microcin family. As to quaternary structure, multimer. Possibly forms a homodimer or a homotrimer. The C-terminal Ser is modified by attachment to a siderophore similar to enterobactin, which can bind one atom of iron. The modification consists of an ester linkage of the serine carboxyl to O6 of a glucose which is linked by a C-glycosidic bond to the 5'-benzoyl of a linear triester of N-(2,3-dihydroxybenzoyl)serine. Presence of the siderophore ester increases the antibacterial activity of the protein.

Channel-forming bacteriocin. Forms cation-selective channels. Active on enterobacteria, with highest activity against E.coli. Not active on other Gram-negative bacteria, Gram-positive bacteria or fungi. The unmodified protein is active against E.coli and S.enteritidis. When the siderophore ester is present at Ser-99, antibacterial activity against these species is increased and activity is also detected against E.cloacae and K.pneumoniae. Neutralized by its immunity protein MceB. The protein is Microcin E492 of Klebsiella pneumoniae.